The chain runs to 507 residues: ESX-5 secretion system ATPase EccB5 (507 aa).

Residues 56-76 (VVASVSAALVICLGSLLWSFI) traverse the membrane as a helical segment.

It belongs to the EccB family. Part of the ESX-5 / type VII secretion system (T7SS), which is composed of cytosolic and membrane components. The ESX-5 membrane complex is composed of EccB5, EccC5, EccD5 and EccE5.

It is found in the cell inner membrane. In terms of biological role, an ATPase. Part of the ESX-5 specialized secretion system, which is responsible for the secretion of EsxN and a number of PE_PGRS and PPE proteins. This is ESX-5 secretion system ATPase EccB5 from Mycobacterium marinum (strain ATCC BAA-535 / M).